The chain runs to 344 residues: Dihydroorotase (344 aa).

Positions 14 and 16 each coordinate Zn(2+). Residues 16-18 (HLR) and N42 each bind substrate. 3 residues coordinate Zn(2+): K100, H137, and H175. The residue at position 100 (K100) is an N6-carboxylysine. H137 contacts substrate. L220 serves as a coordination point for substrate. Zn(2+) is bound at residue D248. Residue D248 is part of the active site. Substrate-binding residues include H252 and A264.

The protein belongs to the metallo-dependent hydrolases superfamily. DHOase family. Class II DHOase subfamily. Homodimer. It depends on Zn(2+) as a cofactor.

The catalysed reaction is (S)-dihydroorotate + H2O = N-carbamoyl-L-aspartate + H(+). It participates in pyrimidine metabolism; UMP biosynthesis via de novo pathway; (S)-dihydroorotate from bicarbonate: step 3/3. Catalyzes the reversible cyclization of carbamoyl aspartate to dihydroorotate. The polypeptide is Dihydroorotase (Roseobacter denitrificans (strain ATCC 33942 / OCh 114) (Erythrobacter sp. (strain OCh 114))).